The following is a 290-amino-acid chain: ATP synthase gamma chain (290 aa).

It belongs to the ATPase gamma chain family. As to quaternary structure, F-type ATPases have 2 components, CF(1) - the catalytic core - and CF(0) - the membrane proton channel. CF(1) has five subunits: alpha(3), beta(3), gamma(1), delta(1), epsilon(1). CF(0) has three main subunits: a, b and c.

Its subcellular location is the cell membrane. Its function is as follows. Produces ATP from ADP in the presence of a proton gradient across the membrane. The gamma chain is believed to be important in regulating ATPase activity and the flow of protons through the CF(0) complex. This is ATP synthase gamma chain from Buchnera aphidicola subsp. Schlechtendalia chinensis.